The primary structure comprises 257 residues: Pyridoxine/pyridoxamine 5'-phosphate oxidase (257 aa).

A substrate-binding site is contributed by 33–36 (RIKY). 90–93 (RFVL) serves as a coordination point for FMN. Lys-95 lines the pyridoxal 5'-phosphate pocket. Residues 105-106 (YT) and Lys-112 contribute to the FMN site. Residues Tyr-152, Arg-156, and Ser-160 each contribute to the pyridoxal 5'-phosphate site. FMN contacts are provided by residues 169-170 (QS) and Trp-216. 222–224 (RLH) is a binding site for substrate. Residue Arg-226 coordinates FMN.

Belongs to the pyridoxamine 5'-phosphate oxidase family. Homodimer. Requires FMN as cofactor. Expressed in silk gland and fat body of the larva.

The enzyme catalyses pyridoxamine 5'-phosphate + O2 + H2O = pyridoxal 5'-phosphate + H2O2 + NH4(+). It carries out the reaction pyridoxine 5'-phosphate + O2 = pyridoxal 5'-phosphate + H2O2. It participates in cofactor metabolism; pyridoxal 5'-phosphate salvage; pyridoxal 5'-phosphate from pyridoxamine 5'-phosphate: step 1/1. It functions in the pathway cofactor metabolism; pyridoxal 5'-phosphate salvage; pyridoxal 5'-phosphate from pyridoxine 5'-phosphate: step 1/1. Its function is as follows. Catalyzes the oxidation of either pyridoxine 5'-phosphate (PNP) or pyridoxamine 5'-phosphate (PMP) into pyridoxal 5'-phosphate (PLP). The sequence is that of Pyridoxine/pyridoxamine 5'-phosphate oxidase from Bombyx mori (Silk moth).